We begin with the raw amino-acid sequence, 1201 residues long: Potassium channel subfamily T member 1 (1201 aa).

The interval 1 to 28 (MARAKLKNSPSESNSHVKTVPPATTEDV) is disordered. The Cytoplasmic segment spans residues 1–92 (MARAKLKNSP…FFIKNQRSSL (92 aa)). Polar residues predominate over residues 8–17 (NSPSESNSHV). Residues 93–115 (RIRLFNFSLKLLTCLLYIVRVLL) form a helical membrane-spanning segment. Topologically, residues 116–152 (DNPEEGIGCWECEKQNYTLFNQSTKINWSHIFWVDRK) are extracellular. N131 and N136 each carry an N-linked (GlcNAc...) asparagine glycan. The helical transmembrane segment at 153-175 (LPLWAVQVSIALISFLETMLLIY) threads the bilayer. The Cytoplasmic segment spans residues 176–184 (LSYKGNIWE). Residues 185 to 206 (QIFRISFILEMINTVPFIITIF) traverse the membrane as a helical segment. At 207-216 (WPPLRNLFIP) the chain is on the extracellular side. A helical transmembrane segment spans residues 217–229 (VFLNCWLAKYALE). The Cytoplasmic portion of the chain corresponds to 230 to 249 (NMINDLHRAIQRTQSAMFNQ). A helical membrane pass occupies residues 250 to 272 (VLILICTLLCLVFTGTCGIQHLE). At 273-279 (RAGEKLS) the chain is on the extracellular side. Positions 280-300 (LFKSFYFCIVTFSTVGYGDVT) form an intramembrane region, pore-forming. Positions 294 and 295 each coordinate K(+). Topologically, residues 301–304 (PKIW) are extracellular. A helical membrane pass occupies residues 305 to 326 (PSQLLVVIMICVALVVLPLQFE). Topologically, residues 327–1201 (ELVYLWMERQ…NPETRDETQL (875 aa)) are cytoplasmic. Residues 350–486 (EKHVVLCVSS…FHVKFADHVV (137 aa)) enclose the RCK N-terminal 1 domain. Na(+) contacts are provided by L511, H514, S536, and N538. Zn(2+) is bound by residues C750 and C751. The K(+) site is built by R753 and K756. Residues R753 and K756 each coordinate Na(+). C758 and H760 together coordinate Zn(2+). K(+)-binding residues include N761, Y769, and G770. F771 contributes to the Na(+) binding site. The 141-residue stretch at 773–913 (NKLIIVSAET…QFRAKDSYSL (141 aa)) folds into the RCK N-terminal 2 domain. Positions 779, 810, 812, 834, and 857 each coordinate K(+). The tract at residues 1175–1201 (NDGHSRKSSCSNKLGPCNPETRDETQL) is disordered.

Belongs to the potassium channel family. Calcium-activated (TC 1.A.1.3) subfamily. KCa4.1/KCNT1 sub-subfamily. Homotetramer; which constitutes the Na(+)-activated K(+) channel. Interacts with KCNT2; these heterodimer channels differ from the homomers in their unitary conductance, kinetic behavior, subcellular localization, and response to activation of protein kinase C. In terms of processing, phosphorylated by protein kinase C. Phosphorylation of the C-terminal domain increases channel activity.

The protein localises to the cell membrane. The catalysed reaction is K(+)(in) = K(+)(out). Its activity is regulated as follows. Activated by high intracellular Na(+). In addition to activation by Na(+), is cooperatively activated by intracellular Cl(-) levels. Inhibited by Zn(2+). Activated upon stimulation of G-protein coupled receptors, such as CHRM1 and GRIA1. Sodium-activated K(+) channel. Acts as an important mediator of neuronal membrane excitability. Contributes to the delayed outward currents. Regulates of neuronal bursting in sensory neurons. Contributes to synaptic development and plasticity. The sequence is that of Potassium channel subfamily T member 1 (KCNT1) from Gallus gallus (Chicken).